The sequence spans 291 residues: Protein ILRUN (291 aa).

The segment at 199-275 (NTQPHRKVEG…PSSHSNNLSV (77 aa)) is disordered. A compositionally biased stretch (low complexity) spans 257 to 275 (LSQNSVNLSPSSHSNNLSV).

The protein resides in the cytoplasm. It localises to the nucleus. May have a roles as negative regulator of innate antiviral response. This chain is Protein ILRUN (ILRUN), found in Gallus gallus (Chicken).